The sequence spans 131 residues: Small ribosomal subunit protein uS8 (131 aa).

Belongs to the universal ribosomal protein uS8 family. As to quaternary structure, part of the 30S ribosomal subunit. Contacts proteins S5 and S12.

Its function is as follows. One of the primary rRNA binding proteins, it binds directly to 16S rRNA central domain where it helps coordinate assembly of the platform of the 30S subunit. In Hyphomonas neptunium (strain ATCC 15444), this protein is Small ribosomal subunit protein uS8.